Here is a 172-residue protein sequence, read N- to C-terminus: Large ribosomal subunit protein uL10 (172 aa).

This sequence belongs to the universal ribosomal protein uL10 family. Part of the ribosomal stalk of the 50S ribosomal subunit. The N-terminus interacts with L11 and the large rRNA to form the base of the stalk. The C-terminus forms an elongated spine to which L12 dimers bind in a sequential fashion forming a multimeric L10(L12)X complex.

Its function is as follows. Forms part of the ribosomal stalk, playing a central role in the interaction of the ribosome with GTP-bound translation factors. The chain is Large ribosomal subunit protein uL10 from Rhizobium leguminosarum bv. trifolii (strain WSM2304).